The primary structure comprises 24 residues: GFKQFVHSMGKFGKAFVGEIINPK.

Expressed by the skin glands.

The protein resides in the secreted. Has antibacterial activity. The sequence is that of Xenoposin-precursor fragment B1 from Xenopus borealis (Kenyan clawed frog).